A 256-amino-acid chain; its full sequence is Pimeloyl-[acyl-carrier protein] methyl ester esterase (256 aa).

Residues 17–241 (VYLIHGWGAN…KAAHAPFLSH (225 aa)) form the AB hydrolase-1 domain. Substrate contacts are provided by residues Trp23, 83 to 84 (SL), and 145 to 149 (FLQLQ). Ser83 serves as the catalytic Nucleophile. Residues Asp207 and His235 contribute to the active site. Substrate is bound at residue His235.

The protein belongs to the AB hydrolase superfamily. Carboxylesterase BioH family. As to quaternary structure, monomer.

The protein resides in the cytoplasm. The enzyme catalyses 6-carboxyhexanoyl-[ACP] methyl ester + H2O = 6-carboxyhexanoyl-[ACP] + methanol + H(+). It participates in cofactor biosynthesis; biotin biosynthesis. Its function is as follows. The physiological role of BioH is to remove the methyl group introduced by BioC when the pimeloyl moiety is complete. It allows to synthesize pimeloyl-ACP via the fatty acid synthetic pathway through the hydrolysis of the ester bonds of pimeloyl-ACP esters. The polypeptide is Pimeloyl-[acyl-carrier protein] methyl ester esterase (Neisseria meningitidis serogroup C / serotype 2a (strain ATCC 700532 / DSM 15464 / FAM18)).